We begin with the raw amino-acid sequence, 347 residues long: Endo-1,4-beta-xylanase 3 (347 aa).

A signal peptide spans 1–16; it reads MKANVILCLLAPLVAA. Positions 17–45 are excised as a propeptide; it reads LPTETIHLDPELAALRANLTERTADLWDR. A Pyrrolidone carboxylic acid modification is found at Gln-46. In terms of domain architecture, GH10 spans 46–345; it reads QASQSIDQLI…KPAYNSIVGI (300 aa). Catalysis depends on Glu-176, which acts as the Proton donor. Catalysis depends on Glu-282, which acts as the Nucleophile. Cysteines 300 and 306 form a disulfide.

Belongs to the glycosyl hydrolase 10 (cellulase F) family. As to quaternary structure, monomer. Not glycosylated.

It is found in the secreted. The enzyme catalyses Endohydrolysis of (1-&gt;4)-beta-D-xylosidic linkages in xylans.. Its pathway is glycan degradation; xylan degradation. Glycoside hydrolase involved in the hydrolysis of xylan, a major plant cell wall hemicellulose made up of 1,4-beta-linked D-xylopyranose residues. Catalyzes the endohydrolysis of the main-chain 1,4-beta-glycosidic bonds connecting the xylose subunits yielding various xylooligosaccharides and xylose. Produces xylobiose and xylotriose as the main degradation products. The chain is Endo-1,4-beta-xylanase 3 (xyn3) from Hypocrea jecorina (strain QM6a) (Trichoderma reesei).